The following is a 222-amino-acid chain: UPF0502 protein Shewmr4_1554 (222 aa).

Residues 175–193 (SLSADSPSAGSNSLNAQDR) show a composition bias toward polar residues. The interval 175–194 (SLSADSPSAGSNSLNAQDRQ) is disordered.

Belongs to the UPF0502 family.

This chain is UPF0502 protein Shewmr4_1554, found in Shewanella sp. (strain MR-4).